Reading from the N-terminus, the 123-residue chain is Large ribosomal subunit protein bL12 (123 aa).

The protein belongs to the bacterial ribosomal protein bL12 family. As to quaternary structure, homodimer. Part of the ribosomal stalk of the 50S ribosomal subunit. Forms a multimeric L10(L12)X complex, where L10 forms an elongated spine to which 2 to 4 L12 dimers bind in a sequential fashion. Binds GTP-bound translation factors.

In terms of biological role, forms part of the ribosomal stalk which helps the ribosome interact with GTP-bound translation factors. Is thus essential for accurate translation. The sequence is that of Large ribosomal subunit protein bL12 from Acinetobacter baumannii (strain AB307-0294).